We begin with the raw amino-acid sequence, 232 residues long: UPF0758 protein Amet_2289 (232 aa).

One can recognise an MPN domain in the interval 110–232 (RIKSPDDVSN…YYSLKEKSMM (123 aa)). H181, H183, and D194 together coordinate Zn(2+). The JAMM motif signature appears at 181 to 194 (HNHPSGDPSPSGED).

It belongs to the UPF0758 family.

This chain is UPF0758 protein Amet_2289, found in Alkaliphilus metalliredigens (strain QYMF).